The following is a 549-amino-acid chain: Nectin-3 (549 aa).

A signal peptide spans 1–57 (MARTPGPAPLCPGGGKAQLSSAFPPAAGLLLPAPTPPPLLLLLIPLLLFSRLCGALA). The Ig-like V-type domain maps to 58–165 (GSIIVEPHVT…GNAQSSTTVT (108 aa)). At 58–404 (GSIIVEPHVT…ATLKDDTIGT (347 aa)) the chain is on the extracellular side. Residues asparagine 73, asparagine 83, asparagine 125, asparagine 186, asparagine 222, and asparagine 331 are each glycosylated (N-linked (GlcNAc...) asparagine). Cysteine 78 and cysteine 148 are joined by a disulfide. Ig-like C2-type domains are found at residues 170-258 (PTVS…KDIR) and 269-354 (PEVS…KVIY). Disulfide bonds link cysteine 193/cysteine 246 and cysteine 291/cysteine 338. A helical transmembrane segment spans residues 405–425 (IIASVVGGALFLVLVSILAGV). Over 426 to 549 (FCYRRRRTFR…SVISRREWYV (124 aa)) the chain is Cytoplasmic.

The protein belongs to the nectin family. In terms of assembly, cis- and trans-homodimer. Can form trans-heterodimers with NECTIN1, NECTIN2, PVR, IGSF4B/Necl-1 and with IGSF4. Interaction between NECTIN1 and NECTIN3 on the pre- and postsynaptic sites, respectively, initiates the formation of puncta adherentia junctions between axons and dendrites. Interacts (via Cytoplasmic domain) with AFDN, providing a connection with the actin cytoskeleton. Binds with low affinity to TIGIT. As to expression, ubiquitous with high expression in testes. Localized in spermatids at Sertoli-spermatid junctions. Expressed in ovarian granulosa cells, but only faintly expressed after ovulation.

The protein resides in the cell membrane. It is found in the postsynaptic cell membrane. Its subcellular location is the cell junction. It localises to the adherens junction. Its function is as follows. Cell adhesion molecule that promotes cell-cell adhesion through heterophilic trans-interactions with nectins-like or other nectins, such as trans-interaction with NECTIN2 at Sertoli-spermatid junctions. Trans-interaction with PVR induces activation of CDC42 and RAC small G proteins through common signaling molecules such as SRC and RAP1. Induces endocytosis-mediated down-regulation of PVR from the cell surface, resulting in reduction of cell movement and proliferation. Involved in axon guidance by promoting contacts between the commissural axons and the floor plate cells. Also involved in the formation of cell-cell junctions, including adherens junctions and synapses. Promotes formation of checkerboard-like cellular pattern of hair cells and supporting cells in the auditory epithelium via heterophilic interaction with NECTIN1: NECTIN1 is present in the membrane of hair cells and associates with NECTIN3 on supporting cells, thereby mediating heterotypic adhesion between these two cell types. Plays a role in the morphology of the ciliary body. This chain is Nectin-3, found in Mus musculus (Mouse).